The following is a 461-amino-acid chain: MLKIFNTLSRQKEEFKPIHAGKVGMYVCGITIYDLCHIGHGRTFVAFDVVARYLRYLGYSLTYVRNVTDVDDKIIKRAIENNETCEQLTTRMLAEMHKDFDALNLERPDLEPRATHHIAEIIEMTERLIARGHAYVASNGDVMFAVDSDPDYGVLSRQDLDQLQAGARVEVADVKRNPMDFVLWKMSKPGEPRWESPWGPGRPGWHIECSAMNGKQLGAHFDIHGGGSDLMFPHHENEIAQSTCAHDGPYVNYWMHSGMVMIDKEKMSKSLNNFFTIRDVLAYYDAETVRYFLMSGHYRSQLNYSEENLKQARASLERLYTALRGTDANATPAGGAEFEARFRTAMDDDFNTPEAYSVLFDIAREVNRLKNEDMAAANGLAAELRKLAQVLGLLEQDPELFLQGGAQADDDEVAKIEALIKQRNDARSSKNWALADAARDQLNDLGIVLEDGPQGTTWRRK.

Residue Cys-28 coordinates Zn(2+). A 'HIGH' region motif is present at residues 30–40; that stretch reads ITIYDLCHIGH. Zn(2+) contacts are provided by Cys-209, His-234, and Glu-238. Residues 266 to 270 carry the 'KMSKS' region motif; the sequence is KMSKS. Residue Lys-269 participates in ATP binding.

This sequence belongs to the class-I aminoacyl-tRNA synthetase family. In terms of assembly, monomer. Requires Zn(2+) as cofactor.

The protein resides in the cytoplasm. The enzyme catalyses tRNA(Cys) + L-cysteine + ATP = L-cysteinyl-tRNA(Cys) + AMP + diphosphate. This Yersinia pseudotuberculosis serotype IB (strain PB1/+) protein is Cysteine--tRNA ligase.